Here is a 392-residue protein sequence, read N- to C-terminus: Putative pectate lyase 21 (392 aa).

Positions 1 to 21 (MSIVCTFFLFLLNTSFAFAFA) are cleaved as a signal peptide. A glycan (N-linked (GlcNAc...) asparagine) is linked at N38. 3 residues coordinate Ca(2+): D189, D213, and D217. An N-linked (GlcNAc...) asparagine glycan is attached at N220. The active site involves R269.

The protein belongs to the polysaccharide lyase 1 family. Ca(2+) serves as cofactor.

It carries out the reaction Eliminative cleavage of (1-&gt;4)-alpha-D-galacturonan to give oligosaccharides with 4-deoxy-alpha-D-galact-4-enuronosyl groups at their non-reducing ends.. It participates in glycan metabolism; pectin degradation; 2-dehydro-3-deoxy-D-gluconate from pectin: step 2/5. This Arabidopsis thaliana (Mouse-ear cress) protein is Putative pectate lyase 21.